A 342-amino-acid polypeptide reads, in one-letter code: NADH-ubiquinone oxidoreductase chain 2 (342 aa).

9 helical membrane passes run 25-45, 58-78, 94-114, 146-166, 174-194, 195-215, 238-258, 274-294, and 316-336; these read TPWL…IPML, IKYF…ILII, MMIM…FWLP, MSSF…MGGL, ILAY…TISE, NTWE…IFMF, FMMM…GFLP, LVLL…RISF, and VVAL…TSNF.

It belongs to the complex I subunit 2 family.

The protein resides in the mitochondrion inner membrane. The enzyme catalyses a ubiquinone + NADH + 5 H(+)(in) = a ubiquinol + NAD(+) + 4 H(+)(out). Its function is as follows. Core subunit of the mitochondrial membrane respiratory chain NADH dehydrogenase (Complex I) that is believed to belong to the minimal assembly required for catalysis. Complex I functions in the transfer of electrons from NADH to the respiratory chain. The immediate electron acceptor for the enzyme is believed to be ubiquinone. This is NADH-ubiquinone oxidoreductase chain 2 (ND2) from Locusta migratoria (Migratory locust).